Consider the following 111-residue polypeptide: Cell division protein FtsB (111 aa).

The Cytoplasmic portion of the chain corresponds to 1–3 (MRL). The helical transmembrane segment at 4 to 21 (ITLFLLLLLLAIQYPLWL) threads the bilayer. Residues 22-111 (GKGGWLRVWD…PAALQPNHRH (90 aa)) are Periplasmic-facing. Residues 28–64 (RVWDMQKQVASQNQRNAELKQRNLKLEGEVKDLKEGT) adopt a coiled-coil conformation. Residues 90–111 (PAPKTSETPLPPPAALQPNHRH) are disordered.

The protein belongs to the FtsB family. Part of a complex composed of FtsB, FtsL and FtsQ.

Its subcellular location is the cell inner membrane. In terms of biological role, essential cell division protein. May link together the upstream cell division proteins, which are predominantly cytoplasmic, with the downstream cell division proteins, which are predominantly periplasmic. The chain is Cell division protein FtsB from Ralstonia nicotianae (strain ATCC BAA-1114 / GMI1000) (Ralstonia solanacearum).